We begin with the raw amino-acid sequence, 225 residues long: Cytidylate kinase (225 aa).

ATP is bound at residue 12–20; it reads GPSGAGKGT.

The protein belongs to the cytidylate kinase family. Type 1 subfamily.

It localises to the cytoplasm. The catalysed reaction is CMP + ATP = CDP + ADP. It carries out the reaction dCMP + ATP = dCDP + ADP. This is Cytidylate kinase from Edwardsiella ictaluri (strain 93-146).